The primary structure comprises 222 residues: Protein Thf1 (222 aa).

Residues 169–208 are a coiled coil; it reads IEKVKRDLELYRSNLDKINQARSLMKELVEQERKRRAQQT. The tract at residues 197–222 is disordered; it reads VEQERKRRAQQTSAPPAVDASSDAPA. Residues 209 to 222 are compositionally biased toward low complexity; it reads SAPPAVDASSDAPA.

This sequence belongs to the THF1 family.

May be involved in photosynthetic membrane biogenesis. This chain is Protein Thf1, found in Thermosynechococcus vestitus (strain NIES-2133 / IAM M-273 / BP-1).